The following is a 61-amino-acid chain: Small ribosomal subunit protein uS14 (61 aa).

The Zn(2+) site is built by Cys24, Cys27, Cys40, and Cys43.

This sequence belongs to the universal ribosomal protein uS14 family. Zinc-binding uS14 subfamily. As to quaternary structure, part of the 30S ribosomal subunit. Contacts proteins S3 and S10. The cofactor is Zn(2+).

Functionally, binds 16S rRNA, required for the assembly of 30S particles and may also be responsible for determining the conformation of the 16S rRNA at the A site. The protein is Small ribosomal subunit protein uS14 of Streptococcus thermophilus (strain ATCC BAA-491 / LMD-9).